The primary structure comprises 35 residues: AAAISCVGSKECLPKCKAQGCKSGKCMNKKCKCYC.

Intrachain disulfides connect C6–C26, C12–C31, and C16–C33.

The protein belongs to the short scorpion toxin superfamily. Potassium channel inhibitor family. Alpha-KTx 23 subfamily. Expressed by the venom gland.

It localises to the secreted. Selectively and irreversibly binds (K(d)=2.9 pM) and blocks Kv1.3/KCNA3 potassium channels of human T-lymphocytes. Weakly blocks Kv1.2/KCNA2 (9%). This is Potassium channel toxin alpha-KTx 23.2 from Vaejovis mexicanus smithi (Mexican scorpion).